Reading from the N-terminus, the 241-residue chain is MRKIAIAGNWKMHKTQAEALEFLQTFLPLLQDTPEDRDVILCAPFTTLTALSKNLHGSRVQVGAQNIHWEDTGAFTGEISGPMLLETGVRYVVVGHSERRQFFGETDATVNQRLKAAQNHRLTPILCVGESKAQRDANETETVIFEQLEKGLVGVDQKNLIIAYEPIWAIGTGDTCASSEANRVIGLIRSRLTNHDVTIQYGGSVKPDNVDEIMAQPEIDGALVGGASLAGDGFARVVNYQ.

Position 9-11 (9-11 (NWK)) interacts with substrate. His96 acts as the Electrophile in catalysis. Glu165 functions as the Proton acceptor in the catalytic mechanism. Substrate is bound by residues Gly171, Ser204, and 225–226 (GG).

Belongs to the triosephosphate isomerase family. Homodimer.

Its subcellular location is the cytoplasm. The catalysed reaction is D-glyceraldehyde 3-phosphate = dihydroxyacetone phosphate. The protein operates within carbohydrate biosynthesis; gluconeogenesis. It functions in the pathway carbohydrate degradation; glycolysis; D-glyceraldehyde 3-phosphate from glycerone phosphate: step 1/1. Involved in the gluconeogenesis. Catalyzes stereospecifically the conversion of dihydroxyacetone phosphate (DHAP) to D-glyceraldehyde-3-phosphate (G3P). In Acaryochloris marina (strain MBIC 11017), this protein is Triosephosphate isomerase.